A 910-amino-acid polypeptide reads, in one-letter code: Leucine--tRNA ligase (910 aa).

Positions 42 to 52 (PYPSGKLHMGH) match the 'HIGH' region motif. The short motif at 668–672 (KMSKS) is the 'KMSKS' region element. Lys-671 contacts ATP.

This sequence belongs to the class-I aminoacyl-tRNA synthetase family.

The protein localises to the cytoplasm. The catalysed reaction is tRNA(Leu) + L-leucine + ATP = L-leucyl-tRNA(Leu) + AMP + diphosphate. This is Leucine--tRNA ligase from Neisseria meningitidis serogroup A / serotype 4A (strain DSM 15465 / Z2491).